The chain runs to 154 residues: Small ribosomal subunit protein uS9 (154 aa).

A disordered region spans residues 135–154 (KESKKYGLKKARKAPQYSKR). The segment covering 140–154 (YGLKKARKAPQYSKR) has biased composition (basic residues).

Belongs to the universal ribosomal protein uS9 family.

The sequence is that of Small ribosomal subunit protein uS9 from Salinispora arenicola (strain CNS-205).